The sequence spans 675 residues: Acetyl-coenzyme A synthetase 2 (675 aa).

CoA-binding positions include 206–209 and T325; that span reads RGGK. ATP contacts are provided by residues 401-403, 425-430, D516, and R531; these read GEP and DTMWQT. S539 lines the CoA pocket. ATP is bound at residue R542. A CoA-binding site is contributed by R604.

This sequence belongs to the ATP-dependent AMP-binding enzyme family.

The catalysed reaction is acetate + ATP + CoA = acetyl-CoA + AMP + diphosphate. The protein is Acetyl-coenzyme A synthetase 2 (ACS2) of Zygosaccharomyces bailii.